Consider the following 464-residue polypeptide: Arginine biosynthesis bifunctional protein ArgJ, mitochondrial (464 aa).

Residues threonine 191, lysine 220, threonine 231, glutamate 318, asparagine 459, and threonine 464 each contribute to the substrate site. Threonine 231 functions as the Nucleophile in the catalytic mechanism.

This sequence belongs to the ArgJ family. Heterodimer of an alpha and a beta chain. In terms of processing, the alpha and beta chains are autoproteolytically processed from a single precursor protein within the mitochondrion.

It localises to the mitochondrion matrix. It catalyses the reaction N(2)-acetyl-L-ornithine + L-glutamate = N-acetyl-L-glutamate + L-ornithine. The enzyme catalyses L-glutamate + acetyl-CoA = N-acetyl-L-glutamate + CoA + H(+). It participates in amino-acid biosynthesis; L-arginine biosynthesis; L-ornithine and N-acetyl-L-glutamate from L-glutamate and N(2)-acetyl-L-ornithine (cyclic): step 1/1. It functions in the pathway amino-acid biosynthesis; L-arginine biosynthesis; N(2)-acetyl-L-ornithine from L-glutamate: step 1/4. Catalyzes two activities which are involved in the cyclic version of arginine biosynthesis: the synthesis of acetylglutamate from glutamate and acetyl-CoA, and of ornithine by transacetylation between acetylornithine and glutamate. The polypeptide is Arginine biosynthesis bifunctional protein ArgJ, mitochondrial (Pyricularia oryzae (strain 70-15 / ATCC MYA-4617 / FGSC 8958) (Rice blast fungus)).